A 281-amino-acid chain; its full sequence is CCAAT/enhancer-binding protein epsilon (281 aa).

Residues 1 to 30 (MSHGTYYECEPRGGQQPLEFSGGRAGPGEL) are disordered. Residue K121 forms a Glycyl lysine isopeptide (Lys-Gly) (interchain with G-Cter in SUMO2) linkage. Residue S181 is modified to Phosphoserine. The region spanning 204-267 (SLEYRLRRER…DTLRNLFRQI (64 aa)) is the bZIP domain. Residues 208-245 (RLRRERNNIAVRKSRDKAKRRIMETQQKVLEYMAENER) are basic motif. The tract at residues 246–267 (LRSRVDQLTQELDTLRNLFRQI) is leucine-zipper.

The protein belongs to the bZIP family. C/EBP subfamily. Binds DNA as a homodimer and as a heterodimer. Can form stable heterodimers with CEBPA, CEBPB and CEBPD. Interacts with GATA1 and SPI1. Interacts with SMARCD2.

The protein localises to the nucleus. Transcriptional activator. C/EBP are DNA-binding proteins that recognize two different motifs: the CCAAT homology common to many promoters and the enhanced core homology common to many enhancers. Required for the promyelocyte-myelocyte transition in myeloid differentiation. In Rattus norvegicus (Rat), this protein is CCAAT/enhancer-binding protein epsilon (Cebpe).